We begin with the raw amino-acid sequence, 154 residues long: Ribonuclease K6 (154 aa).

The N-terminal stretch at 1 to 27 (MGPHLLGRSSLLLLLLGMWWSVRPLCA) is a signal peptide. The active-site Proton acceptor is the H42. 4 disulfide bridges follow: C50/C108, C64/C118, C82/C133, and C89/C96. The N-linked (GlcNAc...) asparagine glycan is linked to N59. Residues 65 to 69 (KPENT) and K90 each bind substrate. A glycan (N-linked (GlcNAc...) asparagine) is linked at N104. H149 functions as the Proton donor in the catalytic mechanism.

This sequence belongs to the pancreatic ribonuclease family. In terms of assembly, interacts (via N-terminus) with bacterial lipopolysaccharide (LPS). As to expression, kidney (at protein level).

The protein resides in the secreted. It localises to the lysosome. The protein localises to the cytoplasmic granule. Its function is as follows. Ribonuclease which shows a preference for the pyrimidines uridine and cytosine. Has potent antimicrobial activity against a range of Gram-positive and Gram-negative bacteria, including P.aeruginosa, A.baumanii, M.luteus, S.aureus, E.faecalis, E.faecium, S.saprophyticus and E.coli. Causes loss of bacterial membrane integrity, and also promotes agglutination of Gram-negative bacteria. Probably contributes to urinary tract sterility. Bactericidal activity is independent of RNase activity. In Bos taurus (Bovine), this protein is Ribonuclease K6 (RNASE6).